A 430-amino-acid polypeptide reads, in one-letter code: Serine--tRNA ligase (430 aa).

L-serine is bound at residue 231–233 (TSE). 262-264 (RSE) contacts ATP. Glu285 serves as a coordination point for L-serine. 349–352 (EISS) contacts ATP. L-serine is bound at residue Ser385.

It belongs to the class-II aminoacyl-tRNA synthetase family. Type-1 seryl-tRNA synthetase subfamily. Homodimer. The tRNA molecule binds across the dimer.

The protein localises to the cytoplasm. It catalyses the reaction tRNA(Ser) + L-serine + ATP = L-seryl-tRNA(Ser) + AMP + diphosphate + H(+). The catalysed reaction is tRNA(Sec) + L-serine + ATP = L-seryl-tRNA(Sec) + AMP + diphosphate + H(+). Its pathway is aminoacyl-tRNA biosynthesis; selenocysteinyl-tRNA(Sec) biosynthesis; L-seryl-tRNA(Sec) from L-serine and tRNA(Sec): step 1/1. In terms of biological role, catalyzes the attachment of serine to tRNA(Ser). Is also able to aminoacylate tRNA(Sec) with serine, to form the misacylated tRNA L-seryl-tRNA(Sec), which will be further converted into selenocysteinyl-tRNA(Sec). This Roseobacter denitrificans (strain ATCC 33942 / OCh 114) (Erythrobacter sp. (strain OCh 114)) protein is Serine--tRNA ligase.